Consider the following 134-residue polypeptide: MAATMKKAAAEDVNVTFEDQQKINKFARNTSRITELKEEIEVKKKQLQNLEDACDDIMLADDDCLMIPYQIGDVFISHSQEETQEMLEEAKKNLQEEIDALESRVESIQRVLADLKVQLYAKFGSNINLEADES.

The residue at position 2 (alanine 2) is an N-acetylalanine. Serine 125 bears the Phosphoserine mark.

The protein belongs to the prefoldin subunit beta family. In terms of assembly, heterohexamer of two PFD-alpha type and four PFD-beta type subunits. Interacts with URI1; the interaction is phosphorylation-dependent and occurs in a growth-dependent manner.

It localises to the nucleus. It is found in the cytoplasm. Its subcellular location is the mitochondrion. In terms of biological role, binds specifically to cytosolic chaperonin (c-CPN) and transfers target proteins to it. Binds to nascent polypeptide chain and promotes folding in an environment in which there are many competing pathways for nonnative proteins. The chain is Prefoldin subunit 4 (PFDN4) from Homo sapiens (Human).